Consider the following 448-residue polypeptide: MKSLEYLTETGIKCLKCDEGAIIKVRSDVYCKQCYLRFIRGKQRKQMSSDKYKVKYLRDGASHSTEKVLLAFSGGVSSLVLLDVLARLLEEQKNTHRDLQGFELVVANISESDGTNLESLLSSSSIMQTLLELVGNYEVSIKVKVVTPNIDPVFLRRIGVDYEFNTFANNLSIEEQSVSSLAEILRASPNRSSSEDLRDVIFHQELLRLAQSEGCGTIVYGHSMSRLAIEVLALTVKGRGSNVHSTILDRVEDYCGDQISIIYPFRDLFEYELREYAVLSDLMQYESAFAKYAVPKSKVSKNMTVREILSMYLDRWDESGYLSTASTVVKIGEKLTVPTSQNNSSTYCCDICAKKIYQDPKDWLQMITVNEPAPLVSDEERDYLHQYLTSHTDTISKSGEHVNLCYGCITAINGAGGDSGVIWPLQKDVKFDHGEKEKAKVLKEYSLE.

The protein belongs to the CTU2/NCS2 family.

The protein localises to the cytoplasm. Its pathway is tRNA modification; 5-methoxycarbonylmethyl-2-thiouridine-tRNA biosynthesis. Its function is as follows. Plays a central role in 2-thiolation of mcm(5)S(2)U at tRNA wobble positions of tRNA(Lys), tRNA(Glu) and tRNA(Gln). May act by forming a heterodimer with NCS6 that ligates sulfur from thiocarboxylated URM1 onto the uridine of tRNAs at wobble position. Prior mcm(5) tRNA modification by the elongator complex is required for 2-thiolation. May also be involved in protein urmylation. This Lodderomyces elongisporus (strain ATCC 11503 / CBS 2605 / JCM 1781 / NBRC 1676 / NRRL YB-4239) (Yeast) protein is Cytoplasmic tRNA 2-thiolation protein 2.